Reading from the N-terminus, the 237-residue chain is MKKQAELYRGKAKTVYSTDNPDLLVLEFRNDTSAGDGARIEQFDRKGMVNNKFNHFIMSKLAEAGIPTQMEALLSDTECLVKKLDMVPVECVVRNRAAGSLVKRLGIEEGIELNPPLFDLFLKNDAMHDPMVNDSYCETFGWVSKENLARMRELTYKANDVLKKLFDDAGLILVDFKLEFGLFKGEVVLGDEFSPDGSRLWDKNTLDKMDKDRFRQSLGGLIEAYEEVAHRLGVKLD.

This sequence belongs to the SAICAR synthetase family.

It carries out the reaction 5-amino-1-(5-phospho-D-ribosyl)imidazole-4-carboxylate + L-aspartate + ATP = (2S)-2-[5-amino-1-(5-phospho-beta-D-ribosyl)imidazole-4-carboxamido]succinate + ADP + phosphate + 2 H(+). Its pathway is purine metabolism; IMP biosynthesis via de novo pathway; 5-amino-1-(5-phospho-D-ribosyl)imidazole-4-carboxamide from 5-amino-1-(5-phospho-D-ribosyl)imidazole-4-carboxylate: step 1/2. The protein is Phosphoribosylaminoimidazole-succinocarboxamide synthase of Klebsiella pneumoniae (strain 342).